The following is a 299-amino-acid chain: Taste receptor type 2 member 4 (299 aa).

At 1–9 (MLRLFYFSA) the chain is on the extracellular side. Residues 10–30 (VIASVILNFVGIIMNLFITVV) form a helical membrane-spanning segment. Topologically, residues 31–46 (NCKTWVKSHRISSSDR) are cytoplasmic. Residues 47-67 (ILFSLGITRFLMLGLFLVNTI) form a helical membrane-spanning segment. Topologically, residues 68–81 (YFVSSNMERSVYLS) are extracellular. A helical membrane pass occupies residues 82 to 102 (AFFVLCFMFLDSSSLWFVTLL). The Cytoplasmic segment spans residues 103–131 (NILYCVKITNFQHSVFLLLKRSISPKIPR). A helical transmembrane segment spans residues 132–152 (LLLAFVLISAFTTCLYITLSQ). At 153-172 (ASPFPELVTTRNNTSFNISE) the chain is on the extracellular side. 3 N-linked (GlcNAc...) asparagine glycosylation sites follow: asparagine 164, asparagine 165, and asparagine 169. A helical transmembrane segment spans residues 173 to 193 (GILSLVVSLVLSSSLQFIINV). Residues 194 to 230 (TSASLLIHSLRRHIQKMQKNATGFWNPQMEAHVGAMK) are Cytoplasmic-facing. The helical transmembrane segment at 231 to 251 (LMVYFLILYIPYSVATLVQYL) threads the bilayer. Over 252-262 (PFYAGMDMGTK) the chain is Extracellular. The helical transmembrane segment at 263-283 (SICLIFATLYSPGHSVLIIIT) threads the bilayer. Over 284–299 (HPKLKTTAKKILCFKK) the chain is Cytoplasmic.

The protein belongs to the G-protein coupled receptor T2R family.

It localises to the membrane. The protein localises to the cell projection. Its subcellular location is the cilium membrane. Gustducin-coupled receptor implicated in the perception of bitter compounds in the oral cavity and the gastrointestinal tract. Signals through PLCB2 and the calcium-regulated cation channel TRPM5. In airway epithelial cells, binding of denatonium increases the intracellular calcium ion concentration and stimulates ciliary beat frequency. This chain is Taste receptor type 2 member 4 (TAS2R4), found in Gorilla gorilla gorilla (Western lowland gorilla).